The primary structure comprises 1318 residues: Serine/threonine-protein kinase ppk18 (1318 aa).

The disordered stretch occupies residues 431 to 485; it reads PSVSPEEVHDISQFNHRNDPPITAASVDSSNSFSVHRSSTNHSSTNSGSPNLSRR. Residues 462–479 show a composition bias toward low complexity; it reads SFSVHRSSTNHSSTNSGS. A Protein kinase domain is found at 566-934; that stretch reads YEIIKPISKG…INEIKEHPFF (369 aa). ATP contacts are provided by residues 572-580 and K595; that span reads ISKGTFGTV. The Proton acceptor role is filled by D690. The AGC-kinase C-terminal domain maps to 935–1044; the sequence is NGINWDDIFS…KNLSVLERAN (110 aa). 3 disordered regions span residues 968–1022, 1058–1078, and 1091–1127; these read GAAE…FSEA, KLHI…DMPS, and SLMT…GPKS. The segment covering 972-1000 has biased composition (polar residues); that stretch reads SNMSSSVNSGEEVSKDNNVSQERGSQFLR. Positions 1091–1115 are enriched in polar residues; it reads SLMTNQGSNFSSTDSTPRKSINSSD. Residues 1116–1127 show a composition bias toward basic and acidic residues; the sequence is VESRSKTDGPKS. The Response regulatory domain occupies 1200–1316; sequence KALICVSKLN…LLRGYIARLC (117 aa).

The protein belongs to the protein kinase superfamily. Ser/Thr protein kinase family.

Its subcellular location is the cytoplasm. It catalyses the reaction L-seryl-[protein] + ATP = O-phospho-L-seryl-[protein] + ADP + H(+). The catalysed reaction is L-threonyl-[protein] + ATP = O-phospho-L-threonyl-[protein] + ADP + H(+). The sequence is that of Serine/threonine-protein kinase ppk18 (ppk18) from Schizosaccharomyces pombe (strain 972 / ATCC 24843) (Fission yeast).